The following is a 487-amino-acid chain: ATP-dependent 6-phosphofructokinase (487 aa).

Residues Gly107, 173-174, 198-201, and Lys226 contribute to the ATP site; these read RG and GDGT. Mg(2+) is bound at residue Asp199. Substrate-binding positions include 227-229, 272-274, and Glu325; these read TID and MGR. The Proton acceptor role is filled by Asp229. Residue 341 to 343 participates in ATP binding; that stretch reads SGN. Residue 380-383 participates in substrate binding; it reads YMIR. The short motif at 485 to 487 is the Peroxisomal targeting signal element; it reads AKL.

Belongs to the phosphofructokinase type A (PFKA) family. PPi-dependent PFK group II subfamily. Atypical ATP-dependent clade 'X' sub-subfamily. In terms of assembly, homotetramer. It depends on Mg(2+) as a cofactor.

It localises to the glycosome. It carries out the reaction beta-D-fructose 6-phosphate + ATP = beta-D-fructose 1,6-bisphosphate + ADP + H(+). It functions in the pathway carbohydrate degradation; glycolysis; D-glyceraldehyde 3-phosphate and glycerone phosphate from D-glucose: step 3/4. Its activity is regulated as follows. Allosterically activated by AMP. Catalyzes the phosphorylation of D-fructose 6-phosphate to fructose 1,6-bisphosphate by ATP, the first committing step of glycolysis. The polypeptide is ATP-dependent 6-phosphofructokinase (Trypanosoma brucei brucei).